The chain runs to 322 residues: Germ cell-specific gene 1-like protein (322 aa).

Over Met1–Arg8 the chain is Cytoplasmic. A helical transmembrane segment spans residues Ala9–Thr29. Over Thr30–Lys122 the chain is Extracellular. A helical transmembrane segment spans residues Gly123–Phe143. Topologically, residues Ser144–Asn163 are cytoplasmic. The helical transmembrane segment at Ala164–Tyr184 threads the bilayer. The Extracellular portion of the chain corresponds to Thr185–Gly207. A helical membrane pass occupies residues Trp208–Leu228. The Cytoplasmic segment spans residues Asn229 to Val322. Ser274 is subject to Phosphoserine.

This sequence belongs to the GSG1 family. As to quaternary structure, component of the inner core of AMPAR complexes. AMPAR complexes consist of an inner core made of 4 pore-forming GluA/GRIA proteins (GRIA1, GRIA2, GRIA3 and GRIA4) and 4 major auxiliary subunits arranged in a twofold symmetry. One of the two pairs of distinct binding sites is occupied either by CNIH2, CNIH3 or CACNG2, CACNG3. The other harbors CACNG2, CACNG3, CACNG4, CACNG8 or GSG1L. This inner core of AMPAR complexes is complemented by outer core constituents binding directly to the GluA/GRIA proteins at sites distinct from the interaction sites of the inner core constituents. Outer core constituents include at least PRRT1, PRRT2, CKAMP44/SHISA9, FRRS1L and NRN1. The proteins of the inner and outer core serve as a platform for other, more peripherally associated AMPAR constituents. Alone or in combination, these auxiliary subunits control the gating and pharmacology of the AMPAR complexes and profoundly impact their biogenesis and protein processing. As to expression, expressed in the brain, including hippocampus (at protein level).

It is found in the cell membrane. The protein localises to the synapse. As a component of the inner core of AMPAR complexes, modifies AMPA receptor (AMPAR) gating. In Mus musculus (Mouse), this protein is Germ cell-specific gene 1-like protein (Gsg1l).